The following is a 189-amino-acid chain: Thermostable direct hemolysin 1 (189 aa).

The signal sequence occupies residues 1-24 (MKHQYFAKKSFLFISMLAAFKTSA). A disulfide bridge connects residues Cys175 and Cys185.

It belongs to the TDH hemolysin family. In terms of assembly, homodimer.

In terms of biological role, bacterial hemolysins are exotoxins that attack blood cell membranes and cause cell rupture by mechanisms not clearly defined. The protein is Thermostable direct hemolysin 1 (tdh1) of Vibrio parahaemolyticus serotype O3:K6 (strain RIMD 2210633).